The primary structure comprises 281 residues: Inositol diphosphatase SIW14 (281 aa).

Residues 1–20 are disordered; sequence MGLYQAKNDEGSDPKSSSKI. Residues 7–20 show a composition bias toward basic and acidic residues; the sequence is KNDEGSDPKSSSKI. Phosphoserine is present on Ser-94. The Tyrosine-protein phosphatase domain occupies 121 to 271; the sequence is NFSHVVGEIY…YDDDEIKRIA (151 aa). Residues Asn-189, Ile-190, and His-193 each coordinate 1D-myo-inositol hexakisphosphate. The Phosphocysteine intermediate role is filled by Cys-214.

It belongs to the protein-tyrosine phosphatase family. Atypical dual-specificity phosphatase Siw14-like subfamily. Monomer.

The protein localises to the cytoplasm. It carries out the reaction 5-diphospho-1D-myo-inositol 1,2,3,4,6-pentakisphosphate + H2O = 1D-myo-inositol hexakisphosphate + phosphate + H(+). The catalysed reaction is 5-diphospho-1D-myo-inositol 1,3,4,6-tetrakisphosphate + H2O = 1D-myo-inositol 1,3,4,5,6-pentakisphosphate + phosphate + H(+). It catalyses the reaction 3,5-bis(diphospho)-1D-myo-inositol 1,2,4,6-tetrakisphosphate + H2O = 3-diphospho-1D-myo-inositol 1,2,4,5,6-pentakisphosphate + phosphate + 2 H(+). The enzyme catalyses 1,5-bis(diphospho)-1D-myo-inositol 2,3,4,6-tetrakisphosphate + H2O = 1-diphospho-1D-myo-inositol 2,3,4,5,6-pentakisphosphate + phosphate + 2 H(+). It carries out the reaction 6-diphospho-1D-myo-inositol pentakisphosphate + H2O = 1D-myo-inositol hexakisphosphate + phosphate + H(+). Functionally, selectively cleaves the beta-phosphate at the 5-position of soluble inositol pyrophosphates. Converts 5-diphosphoinositol tetrakisphosphate (5-PP-InsP(4)) into inositol pentakisphosphate (InsP(5)), 5-diphosphoinositol pentakisphosphate (5-PP-IP(5) or 5-InsP(7)) into inositol hexakisphosphate (IP(6) or InsP(6)), and 1,5-bisdiphosphoinositol tetrakisphosphate (1,5-PP-IP(5) or InsP(8)) into 1-diphosphoinositol pentakisphosphate (1-PP-IP(5) or 1-InsP(7)). Also has activity on 1,5-bis-diphosphoinositol 2,3,4,6-tetrakisphosphate (1,5-InsP(8)) and 3,5-InsP(8). Modulates inositol pyrophosphate metabolism that may have an influence in stress response. Plays a role in actin filament organization and endocytosis. Functions as a prion suppressing factor possibly due to its phosphatase activity against inositol pyrophosphates, which are signal transduction molecules involved in prion propagation. This Saccharomyces cerevisiae (strain ATCC 204508 / S288c) (Baker's yeast) protein is Inositol diphosphatase SIW14 (SIW14).